Here is a 731-residue protein sequence, read N- to C-terminus: 1,4-alpha-glucan branching enzyme GlgB 2 (731 aa).

Asp-410 acts as the Nucleophile in catalysis. The active-site Proton donor is the Glu-463.

This sequence belongs to the glycosyl hydrolase 13 family. GlgB subfamily. Monomer.

The enzyme catalyses Transfers a segment of a (1-&gt;4)-alpha-D-glucan chain to a primary hydroxy group in a similar glucan chain.. The protein operates within glycan biosynthesis; glycogen biosynthesis. In terms of biological role, catalyzes the formation of the alpha-1,6-glucosidic linkages in glycogen by scission of a 1,4-alpha-linked oligosaccharide from growing alpha-1,4-glucan chains and the subsequent attachment of the oligosaccharide to the alpha-1,6 position. The chain is 1,4-alpha-glucan branching enzyme GlgB 2 from Xanthomonas oryzae pv. oryzae (strain MAFF 311018).